A 350-amino-acid chain; its full sequence is Trans-enoyl reductase iliB (350 aa).

50-53 (VDGK) is a binding site for NADP(+). 145 to 152 (AAIATVGL) serves as a coordination point for substrate. NADP(+) contacts are provided by residues 177 to 180 (SAAS), Tyr195, and 242 to 243 (LD). 262-266 (TPTQF) lines the substrate pocket. 331-332 (IK) is an NADP(+) binding site.

This sequence belongs to the zinc-containing alcohol dehydrogenase family. In terms of assembly, monomer.

It catalyses the reaction N-[(4E,6E,10S,12Z,14E)-6,10-dimethyl-3-oxohexadeca-4,6,12,14-tetraenoyl]-L-tyrosyl-[ACP] = (3E,5S)-3-[(2E,4E,8S,10E,12Z)-1-hydroxy-4,8-dimethyltetradeca-2,4,10,12-tetraen-1-ylidene]-5-[(4-hydroxyphenyl)methyl]pyrrolidine-2,4-dione + holo-[ACP] + H(+). It functions in the pathway mycotoxin biosynthesis. Its function is as follows. Trans-enoyl reductase; part of the gene cluster that mediates the biosynthesis of ilicicolin H, a 4-hydroxy-2-pyridonealkaloid that has potent and broad antifungal activities by inhibiting the mitochondrial respiration chain. IliB collaborates with the hybrid PKS-NRPS synthetase iliA to assemble the backbone of ilicicolin H. The PKS portion of iliA and trans-acting enoyl reductase iliB work together to construct an octaketide, and two methyl groups are introduced by the MT domain of iliA during the chain assembly. The nascent chain is then condensed with tyrosine, catalyzed by the iliA C domain, and the resulting PKS-NRPS hybrid is offloaded by the iliA RED domain to form an advanced tetramic acid intermediate. The biosynthesis of ilicicolin H starts with formation of the tetramic acid by the hybrid PKS-NRPS synthetase iliA with the partnering trans-enoyl reductase iliB since iliA lacks a designated enoylreductase (ER) domain. The cytochrome P450 monooxygenase iliC then catalyzes the ring expansion of the tetramate to the acyclic 2-pyridone. The pericyclase iliD further converts the acyclic 2-pyridone into 8-epi-ilicicolin H. 8-epi-ilicicolin H might then spontaneously convert to ilicicolin H since ilicicolin H is produced in the absence of the epimerase iliE, in contrast to what was observed for the Talaromyces variabilis ilicolin H biosynthetic pathway. This is Trans-enoyl reductase iliB from Hypocrea jecorina (strain QM6a) (Trichoderma reesei).